The sequence spans 268 residues: Protein APE_1980.1 (268 aa).

Belongs to the CinA family.

In Aeropyrum pernix (strain ATCC 700893 / DSM 11879 / JCM 9820 / NBRC 100138 / K1), this protein is Protein APE_1980.1.